The sequence spans 115 residues: Large ribosomal subunit protein bL19 (115 aa).

It belongs to the bacterial ribosomal protein bL19 family.

Its function is as follows. This protein is located at the 30S-50S ribosomal subunit interface and may play a role in the structure and function of the aminoacyl-tRNA binding site. This Wigglesworthia glossinidia brevipalpis protein is Large ribosomal subunit protein bL19.